The following is a 265-amino-acid chain: Mlc titration factor A (265 aa).

H111, H148, H152, and E211 together coordinate Zn(2+).

It belongs to the MtfA family. Interacts with Mlc. Zn(2+) is required as a cofactor.

The protein resides in the cytoplasm. Functionally, involved in the modulation of the activity of the glucose-phosphotransferase system (glucose-PTS). Interacts with the transcriptional repressor Mlc, preventing its interaction with DNA and leading to the modulation of expression of genes regulated by Mlc, including ptsG, which encodes the PTS system glucose-specific EIICB component. In terms of biological role, shows zinc-dependent metallopeptidase activity. This chain is Mlc titration factor A, found in Escherichia coli O127:H6 (strain E2348/69 / EPEC).